We begin with the raw amino-acid sequence, 106 residues long: CRISPR-associated endoribonuclease Cas2 (106 aa).

D8 serves as a coordination point for Mg(2+). The tract at residues 86-106 is disordered; sequence EEAAEAAVSYPGRSRKKARAG.

It belongs to the CRISPR-associated endoribonuclease Cas2 protein family. As to quaternary structure, homodimer, forms a heterotetramer with a Cas1 homodimer. The cofactor is Mg(2+).

In terms of biological role, CRISPR (clustered regularly interspaced short palindromic repeat), is an adaptive immune system that provides protection against mobile genetic elements (viruses, transposable elements and conjugative plasmids). CRISPR clusters contain sequences complementary to antecedent mobile elements and target invading nucleic acids. CRISPR clusters are transcribed and processed into CRISPR RNA (crRNA). Functions as a ssRNA-specific endoribonuclease. Involved in the integration of spacer DNA into the CRISPR cassette. The chain is CRISPR-associated endoribonuclease Cas2 from Desulforudis audaxviator (strain MP104C).